The primary structure comprises 696 residues: DNA ligase (696 aa).

NAD(+)-binding positions include 43-47 (DGEFD), 92-93 (SL), and Glu-122. Catalysis depends on Lys-124, which acts as the N6-AMP-lysine intermediate. Arg-145, Glu-185, Lys-301, and Lys-325 together coordinate NAD(+). Zn(2+) is bound by residues Cys-419, Cys-422, Cys-438, and Cys-444. The BRCT domain occupies 608–696 (SIPRNLEGLS…GPDAVAESGV (89 aa)).

The protein belongs to the NAD-dependent DNA ligase family. LigA subfamily. Requires Mg(2+) as cofactor. It depends on Mn(2+) as a cofactor.

It carries out the reaction NAD(+) + (deoxyribonucleotide)n-3'-hydroxyl + 5'-phospho-(deoxyribonucleotide)m = (deoxyribonucleotide)n+m + AMP + beta-nicotinamide D-nucleotide.. In terms of biological role, DNA ligase that catalyzes the formation of phosphodiester linkages between 5'-phosphoryl and 3'-hydroxyl groups in double-stranded DNA using NAD as a coenzyme and as the energy source for the reaction. It is essential for DNA replication and repair of damaged DNA. The protein is DNA ligase of Rhodococcus jostii (strain RHA1).